The following is a 129-amino-acid chain: Histone H2A-III (129 aa).

It belongs to the histone H2A family. As to quaternary structure, the nucleosome is a histone octamer containing two molecules each of H2A, H2B, H3 and H4 assembled in one H3-H4 heterotetramer and two H2A-H2B heterodimers. The octamer wraps approximately 147 bp of DNA.

The protein resides in the nucleus. It localises to the chromosome. Core component of nucleosome. Nucleosomes wrap and compact DNA into chromatin, limiting DNA accessibility to the cellular machineries which require DNA as a template. Histones thereby play a central role in transcription regulation, DNA repair, DNA replication and chromosomal stability. DNA accessibility is regulated via a complex set of post-translational modifications of histones, also called histone code, and nucleosome remodeling. In Volvox carteri (Green alga), this protein is Histone H2A-III.